The sequence spans 374 residues: Ribosomal RNA large subunit methyltransferase G (374 aa).

Belongs to the methyltransferase superfamily. RlmG family.

Its subcellular location is the cytoplasm. It carries out the reaction guanosine(1835) in 23S rRNA + S-adenosyl-L-methionine = N(2)-methylguanosine(1835) in 23S rRNA + S-adenosyl-L-homocysteine + H(+). Specifically methylates the guanine in position 1835 (m2G1835) of 23S rRNA. This is Ribosomal RNA large subunit methyltransferase G from Pseudomonas savastanoi pv. phaseolicola (strain 1448A / Race 6) (Pseudomonas syringae pv. phaseolicola (strain 1448A / Race 6)).